The following is a 336-amino-acid chain: 4-hydroxythreonine-4-phosphate dehydrogenase (336 aa).

The substrate site is built by histidine 142 and threonine 143. A divalent metal cation is bound by residues histidine 172, histidine 217, and histidine 274. 3 residues coordinate substrate: lysine 282, asparagine 291, and arginine 300.

This sequence belongs to the PdxA family. In terms of assembly, homodimer. Zn(2+) serves as cofactor. Mg(2+) is required as a cofactor. It depends on Co(2+) as a cofactor.

It localises to the cytoplasm. It catalyses the reaction 4-(phosphooxy)-L-threonine + NAD(+) = 3-amino-2-oxopropyl phosphate + CO2 + NADH. It functions in the pathway cofactor biosynthesis; pyridoxine 5'-phosphate biosynthesis; pyridoxine 5'-phosphate from D-erythrose 4-phosphate: step 4/5. Catalyzes the NAD(P)-dependent oxidation of 4-(phosphooxy)-L-threonine (HTP) into 2-amino-3-oxo-4-(phosphooxy)butyric acid which spontaneously decarboxylates to form 3-amino-2-oxopropyl phosphate (AHAP). The protein is 4-hydroxythreonine-4-phosphate dehydrogenase of Trichlorobacter lovleyi (strain ATCC BAA-1151 / DSM 17278 / SZ) (Geobacter lovleyi).